Consider the following 360-residue polypeptide: SVP1-like protein 2 (360 aa).

WD repeat units lie at residues 12 to 50, 191 to 231, and 236 to 275; these read AHEPAVLNAAFNQDQTCFAVCHESGFQVYNTDPMELRMK, AHKS…LRFE, and LDRATVTSIKFSPDDSKLAVLSDKNTLHVYNLTAADPQPE.

The protein belongs to the WD repeat PROPPIN family.

The protein localises to the vacuole membrane. Its subcellular location is the cytoplasmic vesicle membrane. Its function is as follows. Involved in mitochondrial or peroxisomal functions and amino acid signaling pathways. This is SVP1-like protein 2 (HSV2) from Pichia angusta (Yeast).